A 115-amino-acid chain; its full sequence is Type 3 secretion system chaperone PscG (115 aa).

The protein belongs to the YscG family. As to quaternary structure, forms a stable heterotrimeric complex with PscE and PscF/SctF in the cytoplasm. Co-stabilized by PscE.

The protein localises to the cytoplasm. Its function is as follows. Chaperone of the type III secretion system (T3SS), also called injectisome, which is used to inject bacterial effector proteins into eukaryotic host cells, facilitating the establishment and dissemination of infection. Along with PscE, prevents premature polymerization of the PscF/SctF needle protein within the cytoplasm. Required for type III secretion needle assembly. Also required for cytotoxicity by influencing PscF/SctF levels. The sequence is that of Type 3 secretion system chaperone PscG (pscG) from Pseudomonas aeruginosa (strain ATCC 15692 / DSM 22644 / CIP 104116 / JCM 14847 / LMG 12228 / 1C / PRS 101 / PAO1).